Reading from the N-terminus, the 66-residue chain is Large ribosomal subunit protein bL35 (66 aa).

The segment at 21–40 (KIKSTQSAKRHGMTKRSKRS) is disordered. The segment covering 28 to 40 (AKRHGMTKRSKRS) has biased composition (basic residues).

This sequence belongs to the bacterial ribosomal protein bL35 family.

The chain is Large ribosomal subunit protein bL35 from Ehrlichia canis (strain Jake).